The primary structure comprises 26 residues: Hemocyanin subunit 5 (26 aa).

This sequence belongs to the tyrosinase family. Hemocyanin subfamily. In terms of tissue distribution, hemolymph.

The protein localises to the secreted. Its subcellular location is the extracellular space. In terms of biological role, hemocyanins are copper-containing oxygen carriers occurring freely dissolved in the hemolymph of many mollusks and arthropods. The chain is Hemocyanin subunit 5 from Maja squinado (Mediterranean spider crab).